A 247-amino-acid polypeptide reads, in one-letter code: Ras-like protein family member 11B (247 aa).

The interval 28–245 is small GTPase-like; the sequence is AGRRLVKIAV…ALSAKVRTVT (218 aa). GTP is bound by residues 39–46, 86–93, and 151–154; these read GASGVGKT, DTPGIQVH, and NKAD. The disordered stretch occupies residues 202 to 228; sequence PKQQPSSTPEKRRTSLIPRPKSPNMQD.

It belongs to the small GTPase superfamily. Ras family.

It carries out the reaction GTP + H2O = GDP + phosphate + H(+). The chain is Ras-like protein family member 11B from Mus musculus (Mouse).